We begin with the raw amino-acid sequence, 569 residues long: Membrane protein insertase YidC (569 aa).

The next 8 helical transmembrane spans lie at Val7–Asn24, Gly219–Tyr239, Leu299–Met319, Phe340–Met360, Ile366–Phe386, Ile436–Leu456, Ile485–Ile505, and Pro526–Val546.

Belongs to the OXA1/ALB3/YidC family. Type 1 subfamily. In terms of assembly, interacts with the Sec translocase complex via SecD. Specifically interacts with transmembrane segments of nascent integral membrane proteins during membrane integration.

It is found in the cell inner membrane. In terms of biological role, required for the insertion and/or proper folding and/or complex formation of integral membrane proteins into the membrane. Involved in integration of membrane proteins that insert both dependently and independently of the Sec translocase complex, as well as at least some lipoproteins. Aids folding of multispanning membrane proteins. The chain is Membrane protein insertase YidC from Herminiimonas arsenicoxydans.